Consider the following 287-residue polypeptide: Pyridoxal kinase PdxY (287 aa).

Residues S10 and 45–46 (TQ) contribute to the substrate site. Residues D112, A144, E149, K182, and 209–212 (RPLV) each bind ATP. D224 lines the substrate pocket.

It belongs to the pyridoxine kinase family. PdxY subfamily. Homodimer. It depends on Mg(2+) as a cofactor.

The catalysed reaction is pyridoxal + ATP = pyridoxal 5'-phosphate + ADP + H(+). Its pathway is cofactor metabolism; pyridoxal 5'-phosphate salvage; pyridoxal 5'-phosphate from pyridoxal: step 1/1. Functionally, pyridoxal kinase involved in the salvage pathway of pyridoxal 5'-phosphate (PLP). Catalyzes the phosphorylation of pyridoxal to PLP. The sequence is that of Pyridoxal kinase PdxY from Shigella flexneri.